Here is a 96-residue protein sequence, read N- to C-terminus: UPF0358 protein Aflv_1873 (96 aa).

Belongs to the UPF0358 family.

This is UPF0358 protein Aflv_1873 from Anoxybacillus flavithermus (strain DSM 21510 / WK1).